We begin with the raw amino-acid sequence, 513 residues long: MNSQSNLTQFLKDSESYKTIPIVETITVDTLSPIQIVEKLKQDIVYLLESKDESSSWSRYSFIGLHPFLTLHDDQNKYIARDAAGQKLMQKQELKELLDWMKEQYQIKTPDIDIPFTGGAVGYLSYDLIPTLTSVRPHRSASTIENAHICLPTMIAFDHETNHVHFIQYTQLTGHETEDEKIRAYKEKQKQLEQMIHKLHSKVDMKELILSGNMNEPPSFEHVTSTYEKAQFLKDVEKIKEYIRAGDIFQGVLSQRFDIPVSVSSFELYRVLRIVNPSPYMYFMKLKDRDLVGSSPERLIHAKNGHLEIHPIAGTRKRGTTREEDAELARELLEDEKEKAEHYMLVDLARNDVGRVAEYGSVSVPTFTKVVNFSHVMHIISIVTGKLKRDTHPVDALMSAFPAGTLTGAPKIRAMQLLNEMEPEPRETYGGCIAYIGFDGNIDSCITIRTMSVKNHTASIQAGAGIVADSVPENEWEETCNKAGALLKAIQLAEHIFSEKESVQDESPTISSC.

Residues Ser50 and 279-281 (PYM) contribute to the L-tryptophan site. 314 to 315 (GT) contributes to the chorismate binding site. Glu341 lines the Mg(2+) pocket. Residues Tyr429, Arg449, 463 to 465 (GAG), and Gly465 each bind chorismate. Residue Glu478 participates in Mg(2+) binding.

It belongs to the anthranilate synthase component I family. Heterotetramer consisting of two non-identical subunits: a beta subunit (TrpG) and a large alpha subunit (TrpE). Requires Mg(2+) as cofactor.

The catalysed reaction is chorismate + L-glutamine = anthranilate + pyruvate + L-glutamate + H(+). The protein operates within amino-acid biosynthesis; L-tryptophan biosynthesis; L-tryptophan from chorismate: step 1/5. Its activity is regulated as follows. Feedback inhibited by tryptophan. Part of a heterotetrameric complex that catalyzes the two-step biosynthesis of anthranilate, an intermediate in the biosynthesis of L-tryptophan. In the first step, the glutamine-binding beta subunit (TrpG) of anthranilate synthase (AS) provides the glutamine amidotransferase activity which generates ammonia as a substrate that, along with chorismate, is used in the second step, catalyzed by the large alpha subunit of AS (TrpE) to produce anthranilate. In the absence of TrpG, TrpE can synthesize anthranilate directly from chorismate and high concentrations of ammonia. In Bacillus pumilus (Bacillus mesentericus), this protein is Anthranilate synthase component 1 (trpE).